The chain runs to 341 residues: L-threonine 3-dehydrogenase (341 aa).

Zn(2+) is bound at residue C38. Active-site charge relay system residues include T40 and H43. 6 residues coordinate Zn(2+): H63, E64, C93, C96, C99, and C107. Residues I175, D195, R200, 262–264 (LGI), and 286–287 (IY) contribute to the NAD(+) site.

It belongs to the zinc-containing alcohol dehydrogenase family. As to quaternary structure, homotetramer. Requires Zn(2+) as cofactor.

The protein resides in the cytoplasm. It catalyses the reaction L-threonine + NAD(+) = (2S)-2-amino-3-oxobutanoate + NADH + H(+). The protein operates within amino-acid degradation; L-threonine degradation via oxydo-reductase pathway; glycine from L-threonine: step 1/2. Catalyzes the NAD(+)-dependent oxidation of L-threonine to 2-amino-3-ketobutyrate. This is L-threonine 3-dehydrogenase from Shewanella oneidensis (strain ATCC 700550 / JCM 31522 / CIP 106686 / LMG 19005 / NCIMB 14063 / MR-1).